Consider the following 133-residue polypeptide: Large-conductance mechanosensitive channel (133 aa).

The next 2 helical transmembrane spans lie at 14–34 and 67–87; these read VVDL…VSSL and GNFI…FMFV.

The protein belongs to the MscL family. Homopentamer.

Its subcellular location is the cell membrane. Its function is as follows. Channel that opens in response to stretch forces in the membrane lipid bilayer. May participate in the regulation of osmotic pressure changes within the cell. In Bacillus cereus (strain AH187), this protein is Large-conductance mechanosensitive channel.